The primary structure comprises 130 residues: Small ribosomal subunit protein uS11 (130 aa).

It belongs to the universal ribosomal protein uS11 family. As to quaternary structure, part of the 30S ribosomal subunit. Interacts with proteins S7 and S18. Binds to IF-3.

In terms of biological role, located on the platform of the 30S subunit, it bridges several disparate RNA helices of the 16S rRNA. Forms part of the Shine-Dalgarno cleft in the 70S ribosome. This chain is Small ribosomal subunit protein uS11, found in Campylobacter lari (strain RM2100 / D67 / ATCC BAA-1060).